The chain runs to 498 residues: tRNA-2-methylthio-N(6)-dimethylallyladenosine synthase (498 aa).

The MTTase N-terminal domain occupies 2–118; sequence PRYSITTFGC…LPGLLGDLAI (117 aa). Residues Cys11, Cys47, Cys81, Cys163, Cys167, and Cys170 each coordinate [4Fe-4S] cluster. A Radical SAM core domain is found at 149–393; that stretch reads PRAAPTAFVT…FEESEALLAA (245 aa). The TRAM domain maps to 396-467; sequence SALVGTTQEV…KHSLQAELTE (72 aa). Residues 469 to 498 are disordered; sequence ARAAARPRQRGGLEPRPARRSLPVVAAEGG.

Belongs to the methylthiotransferase family. MiaB subfamily. In terms of assembly, monomer. It depends on [4Fe-4S] cluster as a cofactor.

Its subcellular location is the cytoplasm. The enzyme catalyses N(6)-dimethylallyladenosine(37) in tRNA + (sulfur carrier)-SH + AH2 + 2 S-adenosyl-L-methionine = 2-methylsulfanyl-N(6)-dimethylallyladenosine(37) in tRNA + (sulfur carrier)-H + 5'-deoxyadenosine + L-methionine + A + S-adenosyl-L-homocysteine + 2 H(+). Functionally, catalyzes the methylthiolation of N6-(dimethylallyl)adenosine (i(6)A), leading to the formation of 2-methylthio-N6-(dimethylallyl)adenosine (ms(2)i(6)A) at position 37 in tRNAs that read codons beginning with uridine. This Sorangium cellulosum (strain So ce56) (Polyangium cellulosum (strain So ce56)) protein is tRNA-2-methylthio-N(6)-dimethylallyladenosine synthase.